Reading from the N-terminus, the 457-residue chain is Cell division protein FtsA (457 aa).

The protein belongs to the FtsA/MreB family. Self-interacts. Interacts with FtsZ.

It localises to the cell membrane. Cell division protein that is involved in the assembly of the Z ring. May serve as a membrane anchor for the Z ring. Increased expression restores growth to a PBP2b (penA) deletion strain as well as mreCD and rodA deletions, but not gpsB or rodZ deletions. Does not restore wild-type cell morphology to the penA deletion. This chain is Cell division protein FtsA, found in Streptococcus pneumoniae serotype 2 (strain D39 / NCTC 7466).